A 256-amino-acid polypeptide reads, in one-letter code: Trypsin alpha (256 aa).

Positions 1–22 (MLKIVILLSAVVCALGGTVPEG) are cleaved as a signal peptide. Residues 23 to 30 (LLPQLDGR) constitute a propeptide, activation peptide. The Peptidase S1 domain occupies 31 to 254 (IVGGSATTIS…LRSWVISTAN (224 aa)). A disulfide bond links Cys56 and Cys72. Residues His71 and Asp116 each act as charge relay system in the active site. 2 disulfides stabilise this stretch: Cys180-Cys197 and Cys206-Cys230. The active-site Charge relay system is Ser210.

The protein belongs to the peptidase S1 family.

It is found in the secreted. The protein resides in the extracellular space. The enzyme catalyses Preferential cleavage: Arg-|-Xaa, Lys-|-Xaa.. This chain is Trypsin alpha (alphaTry), found in Drosophila erecta (Fruit fly).